Consider the following 675-residue polypeptide: Secretogranin-1 (675 aa).

Positions 1-20 are cleaved as a signal peptide; sequence MQRAMLLGLLGAAALAAVIS. The cysteines at positions 36 and 57 are disulfide-linked. Basic and acidic residues predominate over residues 64–90; it reads SGKEVKGEEKGENENSKFEVRLLRDPS. Disordered stretches follow at residues 64–507 and 528–555; these read SGKE…YPTT and NSDFEKKGNPDDSFLDDDGEDGNGVTMT. Residues serine 93, serine 99, serine 100, serine 129, and serine 147 each carry the phosphoserine modification. An O-linked (Xyl...) (chondroitin sulfate) serine glycan is attached at serine 93. Basic and acidic residues-rich tracts occupy residues 148–161 and 168–248; these read KEAKIRHSEERGGK and GKIY…KPQE. Serine 190 carries the phosphoserine modification. An O-linked (Xyl...) (chondroitin sulfate) serine glycan is attached at serine 236. The span at 250–269 shows a compositional bias: acidic residues; the sequence is PDQDQSEEESEEGEEGEEGA. Phosphoserine occurs at positions 255, 259, 291, 309, and 333. The span at 292–311 shows a compositional bias: basic and acidic residues; it reads YEGRRPLSEERKHAAGESKD. Tyrosine 339 is subject to Sulfotyrosine. Basic and acidic residues-rich tracts occupy residues 361–410 and 429–452; these read GSEE…EGAK and SRQEKRLLDEGHDPVHESPVDTAK. A phosphoserine mark is found at serine 362, serine 372, serine 375, and serine 397. Tyrosine 469 carries the post-translational modification Sulfotyrosine. Serine 490, serine 529, and serine 540 each carry phosphoserine. Residue tyrosine 563 is modified to Sulfotyrosine. A disordered region spans residues 620-646; the sequence is DFYDSEEQMGPHQEAEDEKDRADQRVL. Tyrosine 622 bears the Sulfotyrosine; partial mark. A Phosphoserine modification is found at serine 624. Basic and acidic residues predominate over residues 637–646; sequence EKDRADQRVL. Arginine 674 is modified (arginine amide; in CCB peptide short form).

It belongs to the chromogranin/secretogranin protein family. In terms of assembly, interacts with ITPR1 in the secretory granules. Extensively processed in glucagonoma tissue by limited proteolysis at conserved basic residues. Alternative processing are seen in different tissues. The proglucagon-converting enzymes present in transformed alpha-cells are likely candidates to be involved in tissue-specific processing. As to expression, expressed in the brain, adrenal medulla and anterior pituitary. In the brain, localized to the hippocampal formation, the endocrine hypothalamus, the olfactory system, and in anatomically distinct structures in the pons-medulla.

It localises to the secreted. Functionally, secretogranin-1 is a neuroendocrine secretory granule protein, which may be the precursor for other biologically active peptides. In Rattus norvegicus (Rat), this protein is Secretogranin-1 (Chgb).